The primary structure comprises 417 residues: NADH-quinone oxidoreductase subunit D (417 aa).

Belongs to the complex I 49 kDa subunit family. NDH-1 is composed of 14 different subunits. Subunits NuoB, C, D, E, F, and G constitute the peripheral sector of the complex.

The protein localises to the cell inner membrane. It catalyses the reaction a quinone + NADH + 5 H(+)(in) = a quinol + NAD(+) + 4 H(+)(out). Its function is as follows. NDH-1 shuttles electrons from NADH, via FMN and iron-sulfur (Fe-S) centers, to quinones in the respiratory chain. The immediate electron acceptor for the enzyme in this species is believed to be ubiquinone. Couples the redox reaction to proton translocation (for every two electrons transferred, four hydrogen ions are translocated across the cytoplasmic membrane), and thus conserves the redox energy in a proton gradient. This is NADH-quinone oxidoreductase subunit D from Burkholderia ambifaria (strain MC40-6).